We begin with the raw amino-acid sequence, 425 residues long: Kynurenine/alpha-aminoadipate aminotransferase, mitochondrial (425 aa).

A mitochondrion-targeting transit peptide spans 1–29; sequence MNYSRFLTATSLARKTSPIRATVEIMSRA. R20 contacts substrate. At S40 the chain carries Phosphoserine. Substrate-binding residues include Y74 and Y142. K172 is subject to N6-succinyllysine. N6-acetyllysine is present on K179. The span at 179–188 shows a compositional bias: basic and acidic residues; the sequence is KPEDSKDPTK. Residues 179–208 form a disordered region; the sequence is KPEDSKDPTKRTPKFLYTIPNGNNPTGNSL. Polar residues predominate over residues 198-208; it reads PNGNNPTGNSL. N202 contacts substrate. An N6-(pyridoxal phosphate)lysine; alternate modification is found at K263. An N6-acetyllysine; alternate mark is found at K263 and K339. An N6-succinyllysine; alternate mark is found at K263 and K339. K351 is subject to N6-acetyllysine. Residue K367 is modified to N6-acetyllysine; alternate. Position 367 is an N6-succinyllysine; alternate (K367). A substrate-binding site is contributed by R399. An N6-acetyllysine modification is found at K422.

The protein belongs to the class-I pyridoxal-phosphate-dependent aminotransferase family. In terms of assembly, homodimer. Requires pyridoxal 5'-phosphate as cofactor. Post-translationally, the N-terminus is blocked.

It is found in the mitochondrion. The catalysed reaction is L-kynurenine + 2-oxoglutarate = kynurenate + L-glutamate + H2O. It catalyses the reaction L-2-aminoadipate + 2-oxoglutarate = 2-oxoadipate + L-glutamate. It carries out the reaction glycine + 2-oxoglutarate = glyoxylate + L-glutamate. The enzyme catalyses L-kynurenine + glyoxylate = kynurenate + glycine + H2O. The catalysed reaction is 3-hydroxy-L-kynurenine + glyoxylate = xanthurenate + glycine + H2O. It catalyses the reaction 2-oxohexanoate + L-kynurenine = L-2-aminohexanoate + kynurenate + H2O. It carries out the reaction 3-phenylpyruvate + L-kynurenine = kynurenate + L-phenylalanine + H2O. The enzyme catalyses 4-methylsulfanyl-2-oxobutanoate + L-kynurenine = kynurenate + L-methionine + H2O. The catalysed reaction is 2-oxo-3-sulfanylpropanoate + L-kynurenine = kynurenate + L-cysteine + H2O. It catalyses the reaction indole-3-pyruvate + L-kynurenine = kynurenate + L-tryptophan + H2O. It carries out the reaction 2-oxopentanoate + L-kynurenine = L-2-aminopentanoate + kynurenate + H2O. The enzyme catalyses 4-methyl-2-oxopentanoate + L-kynurenine = kynurenate + L-leucine + H2O. The catalysed reaction is glyoxylate + L-methionine = 4-methylsulfanyl-2-oxobutanoate + glycine. It catalyses the reaction L-2-aminoadipate + glyoxylate = 2-oxoadipate + glycine. It carries out the reaction L-tyrosine + glyoxylate = 3-(4-hydroxyphenyl)pyruvate + glycine. The enzyme catalyses glyoxylate + L-phenylalanine = 3-phenylpyruvate + glycine. The catalysed reaction is L-tryptophan + glyoxylate = indole-3-pyruvate + glycine. It catalyses the reaction L-leucine + glyoxylate = 4-methyl-2-oxopentanoate + glycine. It carries out the reaction 2-oxobutanoate + L-kynurenine = (2S)-2-aminobutanoate + kynurenate + H2O. The enzyme catalyses 2-oxoadipate + L-kynurenine = L-2-aminoadipate + kynurenate + H2O. The catalysed reaction is 2-oxoadipate + L-kynurenine = 4-(2-aminophenyl)-2,4-dioxobutanoate + L-2-aminoadipate. It participates in amino-acid degradation; L-lysine degradation via saccharopine pathway; glutaryl-CoA from L-lysine: step 4/6. Its function is as follows. Transaminase with broad substrate specificity. Has transaminase activity towards aminoadipate, kynurenine, methionine and glutamate. Shows activity also towards tryptophan, aspartate and hydroxykynurenine. Accepts a variety of oxo-acids as amino-group acceptors, with a preference for 2-oxoglutarate, 2-oxocaproic acid, phenylpyruvate and alpha-oxo-gamma-methiol butyric acid. Can also use glyoxylate as amino-group acceptor (in vitro). This chain is Kynurenine/alpha-aminoadipate aminotransferase, mitochondrial, found in Rattus norvegicus (Rat).